Here is a 1462-residue protein sequence, read N- to C-terminus: Gag-Pol polyprotein (1462 aa).

Residue glycine 2 is the site of N-myristoyl glycine; by host attachment. The short motif at 16 to 22 is the Nuclear export signal element; sequence WESIRLK. Residues 26–32 carry the Nuclear localization signal motif; the sequence is RKKYLIK. Composition is skewed to polar residues over residues 113–125 and 135–151; these read NNST…QRQN and PSGN…TPSG. Positions 113 to 153 are disordered; it reads NNSTATSSGQRQNAGEKEETVPPSGNTGNTGRATETPSGSR. Tyrosine 155 is subject to Phosphotyrosine; by host. 2 CCHC-type zinc fingers span residues 417-434 and 438-455; these read LQCF…NCRA and KGCW…DCTT. The interval 482 to 513 is disordered; the sequence is EHPREREGSGAGDSTDTSGANCPTTGDDDERR. In terms of domain architecture, Peptidase A2 spans 535–604; the sequence is CQALLDTGAD…TPINIIGRNI (70 aa). Aspartate 540 functions as the For protease activity; shared with dimeric partner in the catalytic mechanism. The 191-residue stretch at 658–848 folds into the Reverse transcriptase domain; the sequence is EGKISAVGPE…PPFMWMGYEL (191 aa). Aspartate 724, aspartate 799, and aspartate 800 together coordinate Mg(2+). Positions 841–849 are RT 'primer grip'; it reads FMWMGYELH. Residues 1012–1028 carry the Tryptophan repeat motif motif; it reads WSQWWTDYWQVTWVPEW. Residues 1048–1171 form the RNase H type-1 domain; the sequence is IPEAETFYVD…VDKLVSKNIR (124 aa). Residues aspartate 1057, glutamate 1092, aspartate 1112, and aspartate 1163 each contribute to the Mg(2+) site. An Integrase-type zinc finger spans residues 1177-1218; the sequence is DGINEAQEDHDKYHSNWKALADEYNLPPVVAKEIIAQCPKCH. Residues histidine 1186, histidine 1190, cysteine 1214, and cysteine 1217 each coordinate Zn(2+). The 151-residue stretch at 1228 to 1378 folds into the Integrase catalytic domain; it reads VDYSPEIWQI…TAGERLLDIL (151 aa). Positions 1238 and 1290 each coordinate Mg(2+). The integrase-type DNA-binding region spans 1397 to 1444; sequence FRVYYRDARDPIWKGPARLLWKGEGAVVIKEGEDIKVVPRRKAKIIKE.

Homotrimer. Interacts with gp41 (via C-terminus). In terms of assembly, homodimer. The active site consists of two apposed aspartic acid residues. As to quaternary structure, heterodimer of p66 RT and p51 RT (RT p66/p51). Heterodimerization of RT is essential for DNA polymerase activity. Despite the sequence identities, p66 RT and p51 RT have distinct folding. Homotetramer; may further associate as a homohexadecamer. Mg(2+) serves as cofactor. In terms of processing, specific enzymatic cleavages by the viral protease yield mature proteins. The protease is released by autocatalytic cleavage. The polyprotein is cleaved during and after budding, this process is termed maturation. Proteolytic cleavage of p66 RT removes the RNase H domain to yield the p51 RT subunit. Post-translationally, capsid protein p24 is phosphorylated.

Its subcellular location is the virion. It localises to the host nucleus. The protein localises to the host cytoplasm. It is found in the host cell membrane. It carries out the reaction Specific for a P1 residue that is hydrophobic, and P1' variable, but often Pro.. The catalysed reaction is Endohydrolysis of RNA in RNA/DNA hybrids. Three different cleavage modes: 1. sequence-specific internal cleavage of RNA. Human immunodeficiency virus type 1 and Moloney murine leukemia virus enzymes prefer to cleave the RNA strand one nucleotide away from the RNA-DNA junction. 2. RNA 5'-end directed cleavage 13-19 nucleotides from the RNA end. 3. DNA 3'-end directed cleavage 15-20 nucleotides away from the primer terminus.. The enzyme catalyses 3'-end directed exonucleolytic cleavage of viral RNA-DNA hybrid.. It catalyses the reaction DNA(n) + a 2'-deoxyribonucleoside 5'-triphosphate = DNA(n+1) + diphosphate. With respect to regulation, the viral protease is inhibited by many synthetic protease inhibitors (PIs), such as amprenavir, atazanavir, indinavir, loprinavir, nelfinavir, ritonavir and saquinavir. RT can be inhibited either by nucleoside RT inhibitors (NRTIs) or by non nucleoside RT inhibitors (NNRTIs). NRTIs act as chain terminators, whereas NNRTIs inhibit DNA polymerization by binding a small hydrophobic pocket near the RT active site and inducing an allosteric change in this region. Classical NRTIs are abacavir, adefovir (PMEA), didanosine (ddI), lamivudine (3TC), stavudine (d4T), tenofovir (PMPA), zalcitabine (ddC), and zidovudine (AZT). Classical NNRTIs are atevirdine (BHAP U-87201E), delavirdine, efavirenz (DMP-266), emivirine (I-EBU), and nevirapine (BI-RG-587). The tritherapies used as a basic effective treatment of AIDS associate two NRTIs and one NNRTI. Use of protease inhibitors in tritherapy regimens permit more ambitious therapeutic strategies. Gag-Pol polyprotein and Gag polyprotein may regulate their own translation, by the binding genomic RNA in the 5'-UTR. At low concentration, Gag-Pol and Gag would promote translation, whereas at high concentration, the polyproteins encapsidate genomic RNA and then shut off translation. Its function is as follows. Matrix protein p17 has two main functions: in infected cell, it targets Gag and Gag-pol polyproteins to the plasma membrane via a multipartite membrane-binding signal, that includes its myristointegration complex. The myristoylation signal and the NLS exert conflicting influences its subcellular localization. The key regulation of these motifs might be phosphorylation of a portion of MA molecules on the C-terminal tyrosine at the time of virus maturation, by virion-associated cellular tyrosine kinase. Implicated in the release from host cell mediated by Vpu. Functionally, capsid protein p24 forms the conical core that encapsulates the genomic RNA-nucleocapsid complex in the virion. The core is constituted by capsid protein hexamer subunits. The core is disassembled soon after virion entry. Interaction with host PPIA/CYPA protects the virus from restriction by host TRIM5-alpha and from an unknown antiviral activity in host cells. This capsid restriction by TRIM5 is one of the factors which restricts SIV to the simian species. In terms of biological role, nucleocapsid protein p7 encapsulates and protects viral dimeric unspliced (genomic) RNA. Binds these RNAs through its zinc fingers. Facilitates rearangement of nucleic acid secondary structure during retrotranscription of genomic RNA. This capability is referred to as nucleic acid chaperone activity. The aspartyl protease mediates proteolytic cleavages of Gag and Gag-Pol polyproteins during or shortly after the release of the virion from the plasma membrane. Cleavages take place as an ordered, step-wise cascade to yield mature proteins. This process is called maturation. Displays maximal activity during the budding process just prior to particle release from the cell. Also cleaves Nef and Vif, probably concomitantly with viral structural proteins on maturation of virus particles. Hydrolyzes host EIF4GI and PABP1 in order to shut off the capped cellular mRNA translation. The resulting inhibition of cellular protein synthesis serves to ensure maximal viral gene expression and to evade host immune response. Its function is as follows. Reverse transcriptase/ribonuclease H (RT) is a multifunctional enzyme that converts the viral dimeric RNA genome into dsDNA in the cytoplasm, shortly after virus entry into the cell. This enzyme displays a DNA polymerase activity that can copy either DNA or RNA templates, and a ribonuclease H (RNase H) activity that cleaves the RNA strand of RNA-DNA heteroduplexes in a partially processive 3' to 5' endonucleasic mode. Conversion of viral genomic RNA into dsDNA requires many steps. A tRNA binds to the primer-binding site (PBS) situated at the 5'-end of the viral RNA. RT uses the 3' end of the tRNA primer to perform a short round of RNA-dependent minus-strand DNA synthesis. The reading proceeds through the U5 region and ends after the repeated (R) region which is present at both ends of viral RNA. The portion of the RNA-DNA heteroduplex is digested by the RNase H, resulting in a ssDNA product attached to the tRNA primer. This ssDNA/tRNA hybridizes with the identical R region situated at the 3' end of viral RNA. This template exchange, known as minus-strand DNA strong stop transfer, can be either intra- or intermolecular. RT uses the 3' end of this newly synthesized short ssDNA to perform the RNA-dependent minus-strand DNA synthesis of the whole template. RNase H digests the RNA template except for two polypurine tracts (PPTs) situated at the 5'-end and near the center of the genome. It is not clear if both polymerase and RNase H activities are simultaneous. RNase H can probably proceed both in a polymerase-dependent (RNA cut into small fragments by the same RT performing DNA synthesis) and a polymerase-independent mode (cleavage of remaining RNA fragments by free RTs). Secondly, RT performs DNA-directed plus-strand DNA synthesis using the PPTs that have not been removed by RNase H as primers. PPTs and tRNA primers are then removed by RNase H. The 3' and 5' ssDNA PBS regions hybridize to form a circular dsDNA intermediate. Strand displacement synthesis by RT to the PBS and PPT ends produces a blunt ended, linear dsDNA copy of the viral genome that includes long terminal repeats (LTRs) at both ends. Functionally, integrase catalyzes viral DNA integration into the host chromosome, by performing a series of DNA cutting and joining reactions. This enzyme activity takes place after virion entry into a cell and reverse transcription of the RNA genome in dsDNA. The first step in the integration process is 3' processing. This step requires a complex comprising the viral genome, matrix protein, Vpr and integrase. This complex is called the pre-integration complex (PIC). The integrase protein removes 2 nucleotides from each 3' end of the viral DNA, leaving recessed CA OH's at the 3' ends. In the second step, the PIC enters cell nucleus. This process is mediated through integrase and Vpr proteins, and allows the virus to infect a non dividing cell. This ability to enter the nucleus is specific of lentiviruses, other retroviruses cannot and rely on cell division to access cell chromosomes. In the third step, termed strand transfer, the integrase protein joins the previously processed 3' ends to the 5' ends of strands of target cellular DNA at the site of integration. The 5'-ends are produced by integrase-catalyzed staggered cuts, 5 bp apart. A Y-shaped, gapped, recombination intermediate results, with the 5'-ends of the viral DNA strands and the 3' ends of target DNA strands remaining unjoined, flanking a gap of 5 bp. The last step is viral DNA integration into host chromosome. This involves host DNA repair synthesis in which the 5 bp gaps between the unjoined strands are filled in and then ligated. Since this process occurs at both cuts flanking the SIV genome, a 5 bp duplication of host DNA is produced at the ends of SIV integration. Alternatively, Integrase may catalyze the excision of viral DNA just after strand transfer, this is termed disintegration. In Simian immunodeficiency virus (isolate TAN1) (SIV-cpz), this protein is Gag-Pol polyprotein (gag-pol).